The following is a 274-amino-acid chain: Protein-export membrane protein SecF (274 aa).

Transmembrane regions (helical) follow at residues Leu14–Val34, Ser121–Phe141, Lys143–Gly163, Ala175–Tyr197, Thr217–Met237, and Val247–Ile267.

This sequence belongs to the SecD/SecF family. SecF subfamily. In terms of assembly, part of the protein translocation apparatus. Forms a complex with SecD.

The protein localises to the cell membrane. Functionally, involved in protein export. This is Protein-export membrane protein SecF from Methanopyrus kandleri (strain AV19 / DSM 6324 / JCM 9639 / NBRC 100938).